We begin with the raw amino-acid sequence, 247 residues long: Uridylate kinase (247 aa).

Residue 14–17 (KLSG) participates in ATP binding. The segment at 22–27 (GERGVG) is involved in allosteric activation by GTP. Gly56 provides a ligand contact to UMP. Residues Gly57 and Arg61 each contribute to the ATP site. UMP-binding positions include Asp76 and 137-144 (IGSPYFST). Residues Asn165, Tyr171, and Asp174 each coordinate ATP.

The protein belongs to the UMP kinase family. In terms of assembly, homohexamer.

The protein localises to the cytoplasm. The catalysed reaction is UMP + ATP = UDP + ADP. Its pathway is pyrimidine metabolism; CTP biosynthesis via de novo pathway; UDP from UMP (UMPK route): step 1/1. Allosterically activated by GTP. Inhibited by UTP, 5-bromo-UTP and 5-iodo-UTP. Its function is as follows. Catalyzes the reversible phosphorylation of UMP to UDP, with ATP as the most efficient phosphate donor. The chain is Uridylate kinase (pyrH) from Streptococcus pneumoniae serotype 4 (strain ATCC BAA-334 / TIGR4).